Consider the following 330-residue polypeptide: Putative aminopeptidase (330 aa).

H65 and D168 together coordinate a divalent metal cation. The active-site Proton acceptor is the E198. The a divalent metal cation site is built by E199, D221, and H307.

Belongs to the peptidase M42 family. A divalent metal cation is required as a cofactor.

This chain is Putative aminopeptidase (celM), found in Acetivibrio thermocellus (Hungateiclostridium thermocellum).